A 358-amino-acid polypeptide reads, in one-letter code: Putative myc-like protein MYCLP1 (358 aa).

Disordered regions lie at residues 150 to 171 (ACSR…TVKK) and 219 to 245 (QEGA…DKED). Positions 227–242 (PPKEALEREAPGGKDD) are enriched in basic and acidic residues. Residues 274-326 (WTKKKYHSYLERKRRNDQRSRFLALRDEVPALASCSRVSKVMILVKATEYLHE) enclose the bHLH domain.

Efficient DNA binding requires dimerization with another bHLH protein. Binds DNA as a heterodimer with MAX. Detected in adult testis.

It is found in the nucleus. This Homo sapiens (Human) protein is Putative myc-like protein MYCLP1 (MYCLP1).